The following is a 511-amino-acid chain: Protein phosphatase 2C 7 (511 aa).

Residues 1 to 19 (MEEISPAVALTLGLANTMC) form the signal peptide. One can recognise a PPM-type phosphatase domain in the interval 188-501 (LWGTISICGG…DNISIIVIDL (314 aa)). Mn(2+) is bound by residues aspartate 242, glycine 243, aspartate 432, and aspartate 492.

The protein belongs to the PP2C family. In terms of assembly, interacts with PYL13. Mg(2+) is required as a cofactor. Mn(2+) serves as cofactor. In terms of tissue distribution, expressed in seeds.

The enzyme catalyses O-phospho-L-seryl-[protein] + H2O = L-seryl-[protein] + phosphate. It carries out the reaction O-phospho-L-threonyl-[protein] + H2O = L-threonyl-[protein] + phosphate. In terms of biological role, key component and repressor of the abscisic acid (ABA) signaling pathway that regulates numerous ABA responses, such as stomatal closure, seed germination and inhibition of vegetative growth. The protein is Protein phosphatase 2C 7 (HAB2) of Arabidopsis thaliana (Mouse-ear cress).